The primary structure comprises 354 residues: Methylthioribose-1-phosphate isomerase (354 aa).

Substrate-binding positions include 58–60, arginine 101, and glutamine 204; that span reads RGA. Catalysis depends on aspartate 245, which acts as the Proton donor. Position 255 to 256 (255 to 256) interacts with substrate; the sequence is NK.

Belongs to the eIF-2B alpha/beta/delta subunits family. MtnA subfamily.

The enzyme catalyses 5-(methylsulfanyl)-alpha-D-ribose 1-phosphate = 5-(methylsulfanyl)-D-ribulose 1-phosphate. The protein operates within amino-acid biosynthesis; L-methionine biosynthesis via salvage pathway; L-methionine from S-methyl-5-thio-alpha-D-ribose 1-phosphate: step 1/6. Catalyzes the interconversion of methylthioribose-1-phosphate (MTR-1-P) into methylthioribulose-1-phosphate (MTRu-1-P). In Xylella fastidiosa (strain 9a5c), this protein is Methylthioribose-1-phosphate isomerase.